The primary structure comprises 486 residues: Deleted in azoospermia protein 3 (486 aa).

Residues 1 to 10 show a composition bias toward polar residues; it reads MSAANPETPN. The disordered stretch occupies residues 1-27; the sequence is MSAANPETPNSTISREASTQSSSAAAS. A compositionally biased stretch (low complexity) spans 11 to 27; sequence STISREASTQSSSAAAS. Residues 40–115 enclose the RRM domain; that stretch reads NTVFVGGIDA…KKLKLGPAIR (76 aa). DAZ domains follow at residues 167 to 190, 191 to 214, 215 to 238, 239 to 262, 263 to 286, 287 to 310, 311 to 334, 335 to 358, 359 to 382, 383 to 406, 407 to 430, and 431 to 454; these read AYSA…YNYQ, EYPT…YNYQ, PFPA…YNYQ, and AFPA…YNYQ.

It belongs to the RRM DAZ family. As to quaternary structure, forms a heterodimer with BOLL and DAZL. Interacts with PUM2, DAZAP1, DAZAP2, DZIP1 and DZIP3. In terms of tissue distribution, testis specific.

The protein resides in the cytoplasm. It localises to the nucleus. In terms of biological role, RNA-binding protein that plays an essential role in spermatogenesis. May act by binding to the 3'-UTR of mRNAs and regulating their translation. This chain is Deleted in azoospermia protein 3 (DAZ3), found in Homo sapiens (Human).